Here is a 347-residue protein sequence, read N- to C-terminus: NADH-ubiquinone oxidoreductase chain 2 (347 aa).

10 consecutive transmembrane segments (helical) span residues 3–23 (PPIL…VMLS), 25–45 (HWLL…PILM), 66–86 (ASML…QWMI), 111–131 (FHFW…MILL), 149–169 (INTD…GWGG), 178–198 (IMAY…IYNP), 201–221 (MFLN…LFML), 237–257 (IPLI…LPPL), 274–294 (DMIV…YFYM), and 325–345 (LLPP…MMSI).

Belongs to the complex I subunit 2 family. As to quaternary structure, core subunit of respiratory chain NADH dehydrogenase (Complex I) which is composed of 45 different subunits. Interacts with TMEM242.

The protein resides in the mitochondrion inner membrane. It catalyses the reaction a ubiquinone + NADH + 5 H(+)(in) = a ubiquinol + NAD(+) + 4 H(+)(out). In terms of biological role, core subunit of the mitochondrial membrane respiratory chain NADH dehydrogenase (Complex I) which catalyzes electron transfer from NADH through the respiratory chain, using ubiquinone as an electron acceptor. Essential for the catalytic activity and assembly of complex I. This is NADH-ubiquinone oxidoreductase chain 2 from Vulpes vulpes (Red fox).